A 346-amino-acid polypeptide reads, in one-letter code: Enkurin domain-containing protein 1 (346 aa).

3 disordered regions span residues 1 to 24 (MCEG…DYYR), 88 to 107 (SGVS…NLRR), and 113 to 132 (RRFQ…PLKA). Phosphoserine is present on serine 91. 2 stretches are compositionally biased toward basic and acidic residues: residues 98–107 (KDHEKENLRR) and 113–125 (RRFQ…REQG). At serine 136 the chain carries Phosphoserine. Residues 251–343 (ERRDLWRKEA…IFSRPKVFVK (93 aa)) form the Enkurin domain. The disordered stretch occupies residues 259–280 (EAEARQRSQPDPSMPPGHTLMP).

As to quaternary structure, interacts with alpha-tubulin. Interacts (via central region) with CCP110 (via N-terminal region); competes with CEP97 for binding to CCP110. Widely expressed with highest levels in testis and lung.

The protein localises to the cytoplasm. The protein resides in the cytoskeleton. It is found in the microtubule organizing center. It localises to the centrosome. Its subcellular location is the centriole. The protein localises to the cilium basal body. The protein resides in the cell projection. It is found in the cilium. It localises to the spindle. Its subcellular location is the spindle pole. The protein localises to the cilium axoneme. Functionally, microtubule-binding protein which regulates microtubule organization and stability. Promotes the stability of astral microtubules and facilitates the proper orientation of the mitotic spindle. This allows the oriented division of basal keratinocytes and contributes to epidermal stratification. Required for the assembly of both primary and motile cilia. Destabilizes the interaction between CCP110 and CEP97 by competing with CEP97 for binding to CCP110 which promotes the removal of CCP110 and CEP97 from the mother centriole and allows the initiation of ciliogenesis. The chain is Enkurin domain-containing protein 1 (Enkd1) from Mus musculus (Mouse).